Consider the following 252-residue polypeptide: 4-hydroxy-tetrahydrodipicolinate reductase (252 aa).

NAD(+) contacts are provided by residues 8-13 (GCSGKM), 85-87 (CTT), and 109-112 (SANM). The active-site Proton donor/acceptor is His-142. His-143 is a (S)-2,3,4,5-tetrahydrodipicolinate binding site. The active-site Proton donor is Lys-146. 152-153 (GT) provides a ligand contact to (S)-2,3,4,5-tetrahydrodipicolinate.

This sequence belongs to the DapB family.

The protein localises to the cytoplasm. The catalysed reaction is (S)-2,3,4,5-tetrahydrodipicolinate + NAD(+) + H2O = (2S,4S)-4-hydroxy-2,3,4,5-tetrahydrodipicolinate + NADH + H(+). It catalyses the reaction (S)-2,3,4,5-tetrahydrodipicolinate + NADP(+) + H2O = (2S,4S)-4-hydroxy-2,3,4,5-tetrahydrodipicolinate + NADPH + H(+). It participates in amino-acid biosynthesis; L-lysine biosynthesis via DAP pathway; (S)-tetrahydrodipicolinate from L-aspartate: step 4/4. Its function is as follows. Catalyzes the conversion of 4-hydroxy-tetrahydrodipicolinate (HTPA) to tetrahydrodipicolinate. The chain is 4-hydroxy-tetrahydrodipicolinate reductase from Clostridium novyi (strain NT).